The primary structure comprises 211 residues: Mitotic spindle assembly checkpoint protein MAD2B (211 aa).

The region spanning 13 to 203 is the HORMA domain; the sequence is QVVADILCEF…SDILKMQLYV (191 aa).

As to quaternary structure, homooligomer. Interacts with rev1. Interacts with rev3l. Interacts with fzr1 (in complex with the anaphase promoting complex APC). May interact with cdc20.

The protein resides in the nucleus. It is found in the cytoplasm. The protein localises to the cytoskeleton. Its subcellular location is the spindle. In terms of biological role, adapter protein able to interact with different proteins and involved in different biological processes. Mediates the interaction between the error-prone DNA polymerase zeta catalytic subunit rev3l and the inserter polymerase rev1, thereby mediating the second polymerase switching in translesion DNA synthesis. Translesion DNA synthesis releases the replication blockade of replicative polymerases, stalled in presence of DNA lesions. May also play a role in signal transduction in response to DNA damage. May regulate the activation of the anaphase promoting complex APC thereby regulating progression through the cell cycle. Through transcriptional regulation may play a role in epithelial-mesenchymal transdifferentiation. The polypeptide is Mitotic spindle assembly checkpoint protein MAD2B (mad2l2) (Xenopus tropicalis (Western clawed frog)).